A 297-amino-acid chain; its full sequence is tRNA pseudouridine synthase B (297 aa).

D44 (nucleophile) is an active-site residue.

This sequence belongs to the pseudouridine synthase TruB family. Type 1 subfamily.

It catalyses the reaction uridine(55) in tRNA = pseudouridine(55) in tRNA. In terms of biological role, responsible for synthesis of pseudouridine from uracil-55 in the psi GC loop of transfer RNAs. The chain is tRNA pseudouridine synthase B from Corynebacterium efficiens (strain DSM 44549 / YS-314 / AJ 12310 / JCM 11189 / NBRC 100395).